A 552-amino-acid polypeptide reads, in one-letter code: DNA ligase (552 aa).

Residue Glu229 coordinates ATP. Residue Lys231 is the N6-AMP-lysine intermediate of the active site. Arg236 and Glu283 together coordinate ATP. Residues Glu283 and Glu377 each contribute to the Mg(2+) site. Residues Lys382 and Lys397 each contribute to the ATP site.

Belongs to the ATP-dependent DNA ligase family. Interacts with host TOP2A and TOP2B. The cofactor is Mg(2+).

Its subcellular location is the host cytoplasm. It catalyses the reaction ATP + (deoxyribonucleotide)n-3'-hydroxyl + 5'-phospho-(deoxyribonucleotide)m = (deoxyribonucleotide)n+m + AMP + diphosphate.. In terms of biological role, DNA ligase that seals nicks in double-stranded DNA during DNA replication, DNA recombination and DNA repair. Recruits cellular topoisomerase II to sites of viral replication and assembly. This is DNA ligase (OPG180) from Vaccinia virus (strain Copenhagen) (VACV).